We begin with the raw amino-acid sequence, 385 residues long: Citrate synthase (385 aa).

Residues His223, His263, and Asp318 contribute to the active site.

It belongs to the citrate synthase family. Homodimer.

The catalysed reaction is oxaloacetate + acetyl-CoA + H2O = citrate + CoA + H(+). It functions in the pathway carbohydrate metabolism; tricarboxylic acid cycle; isocitrate from oxaloacetate: step 1/2. Its activity is regulated as follows. Allosterically inhibited by NADH. This chain is Citrate synthase (gltA), found in Thermoplasma acidophilum (strain ATCC 25905 / DSM 1728 / JCM 9062 / NBRC 15155 / AMRC-C165).